A 102-amino-acid polypeptide reads, in one-letter code: Plastocyanin (102 aa).

Residues 1–102 (AKVEVGDEVG…ANMKGTLTVK (102 aa)) enclose the Plastocyanin-like domain. Residues H37, C87, H90, and M95 each coordinate Cu cation.

It belongs to the plastocyanin family. The cofactor is Cu(2+).

The protein resides in the plastid. It localises to the chloroplast thylakoid membrane. Its function is as follows. Participates in electron transfer between P700 and the cytochrome b6-f complex in photosystem I. The protein is Plastocyanin (PETE) of Dryopteris crassirhizoma (Thick stemmed wood fern).